The sequence spans 268 residues: Phosphatidylcholine synthase (268 aa).

The Cytoplasmic portion of the chain corresponds to 1–27 (MAARKAAKKLTDRIPRPKKKVTWPQAR). A helical transmembrane segment spans residues 28–48 (AFSVHLLTASGSFLAFLSLVA). Residues 49–53 (ASEER) are Periplasmic-facing. Residues 54 to 74 (WTAMFWWLGLALFVDGIDGPI) form a helical membrane-spanning segment. Topologically, residues 75–88 (ARKLEVKEILPTWS) are cytoplasmic. Residues 89–109 (GELLDNIIDYVTYVLIPAFAL) traverse the membrane as a helical segment. Residues 110–112 (YQR) lie on the Periplasmic side of the membrane. A helical membrane pass occupies residues 113-133 (GFMGEGLSFLSAAIIVVSSAI). Residues 134-145 (YYADTGMKTKEN) lie on the Cytoplasmic side of the membrane. Residues 146–166 (FFKGFPVVWNMVVFTLFVIEP) form a helical membrane-spanning segment. Over 167–168 (GQ) the chain is Periplasmic. The helical transmembrane segment at 169-189 (WVSFAVVVVAGILTFVPINFI) threads the bilayer. The Cytoplasmic portion of the chain corresponds to 190–203 (HPVRVVRLRPFNLT). Residues 204–224 (MTLLWCAFGALALAQAALAAF) traverse the membrane as a helical segment. Residues 225–240 (YDQIGVLGAQVSTFIK) lie on the Periplasmic side of the membrane. A helical membrane pass occupies residues 241 to 261 (IGITITGLYLACIGGIMQFFP). Residues 262–268 (NLGAKKA) lie on the Cytoplasmic side of the membrane.

Belongs to the CDP-alcohol phosphatidyltransferase class-I family. It depends on Mn(2+) as a cofactor.

Its subcellular location is the cell inner membrane. The enzyme catalyses a CDP-1,2-diacyl-sn-glycerol + choline = a 1,2-diacyl-sn-glycero-3-phosphocholine + CMP + H(+). Condenses choline with CDP-diglyceride to produce phosphatidylcholine and CMP. In Mesorhizobium japonicum (strain LMG 29417 / CECT 9101 / MAFF 303099) (Mesorhizobium loti (strain MAFF 303099)), this protein is Phosphatidylcholine synthase (pcs).